A 474-amino-acid polypeptide reads, in one-letter code: Adenylyl cyclase-associated protein 1 (474 aa).

Alanine 2 carries the N-acetylalanine modification. Phosphotyrosine is present on tyrosine 31. The residue at position 34 (serine 34) is a Phosphoserine. N6-acetyllysine is present on lysine 80. Disordered regions lie at residues 215 to 253 and 277 to 316; these read ELSGLPSGPSVGSGPPPPPPGPPPPPISTSSGSDDSASR and MKTHKNPALKAQSGPVRSGPKPFSAPKPQTSPSPKPATKK. The segment covering 217–227 has biased composition (low complexity); sequence SGLPSGPSVGS. The span at 228-241 shows a compositional bias: pro residues; it reads GPPPPPPGPPPPPI. At lysine 286 the chain carries N6-methyllysine. 3 positions are modified to phosphoserine: serine 289, serine 294, and serine 300. Pro residues predominate over residues 299 to 311; sequence FSAPKPQTSPSPK. Threonine 306 is modified (phosphothreonine). 2 positions are modified to phosphoserine: serine 307 and serine 309. In terms of domain architecture, C-CAP/cofactor C-like spans 312 to 452; that stretch reads PATKKEPALL…EGGDFNEFPV (141 aa). A Glycyl lysine isopeptide (Lys-Gly) (interchain with G-Cter in SUMO1) cross-link involves residue lysine 347.

Belongs to the CAP family. As to quaternary structure, homodimer. Binds actin monomers. Ubiquitous.

The protein localises to the cell membrane. Directly regulates filament dynamics and has been implicated in a number of complex developmental and morphological processes, including mRNA localization and the establishment of cell polarity. The polypeptide is Adenylyl cyclase-associated protein 1 (Cap1) (Mus musculus (Mouse)).